A 545-amino-acid polypeptide reads, in one-letter code: Resolvase homolog YokA (545 aa).

Residues 14 to 165 (NILGYLRRSR…GAKYTYAAQG (152 aa)) enclose the Resolvase/invertase-type recombinase catalytic domain. Positions 19–46 (LRRSRQDMEREKRTGEDTLTEQKELMNK) form a coiled coil. Ser22 acts as the O-(5'-phospho-DNA)-serine intermediate in catalysis. Residues 173–303 (PYGYQLNKKT…VKIANKVPLL (131 aa)) constitute a DNA-binding region (recombinase). Residues 402–475 (NMKTKKQMSE…QDTQSEIDSN (74 aa)) are a coiled coil.

It in the N-terminal section; belongs to the site-specific recombinase resolvase family.

The sequence is that of Resolvase homolog YokA (yokA) from Bacillus subtilis (strain 168).